A 404-amino-acid chain; its full sequence is MSVGMAAPRAAFSCDPDRSRGRQFAEPPSSNRSAFRRDCDRVIHSNAFRRLKHKTQVFVFHEGDHYRTRLTHSLEVAQIARAIARQLGLDEDLTETLALAHDLGHPPFGHAGERALDACLRDHGGFDHNAQTLRVLTALEHRYPGFDGLNLTWETLEGVVKHNGPLTDRTGAPLPRHAERGVPIGIAEFSQRFDLEIWSFASLEAQVAALADDIAYDAHDIDDGLRAGLFRVDDLRAVPLTAALIDGISRRYPALGESRRGAELVRELISHLIGAVTAETMRRLGEAAPRSVEDVRHASTAMVAFPSETAVAEAEIKAFLWTHMYRAERVMAVMRDAEAIVADLFRRYCEHPADLPPDWLPADGPVAECEADRFRRIRNFIAGMTDRYALTEHQRLFDSTPDLR.

The segment at 1–33 (MSVGMAAPRAAFSCDPDRSRGRQFAEPPSSNRS) is disordered. The HD domain maps to 69–217 (RLTHSLEVAQ…AALADDIAYD (149 aa)).

This sequence belongs to the dGTPase family. Type 2 subfamily.

This chain is Deoxyguanosinetriphosphate triphosphohydrolase-like protein, found in Rhodopseudomonas palustris (strain HaA2).